Consider the following 235-residue polypeptide: Ubiquinone/menaquinone biosynthesis C-methyltransferase UbiE (235 aa).

Thr-60, Asp-81, and Ser-126 together coordinate S-adenosyl-L-methionine.

It belongs to the class I-like SAM-binding methyltransferase superfamily. MenG/UbiE family.

It carries out the reaction a 2-demethylmenaquinol + S-adenosyl-L-methionine = a menaquinol + S-adenosyl-L-homocysteine + H(+). The catalysed reaction is a 2-methoxy-6-(all-trans-polyprenyl)benzene-1,4-diol + S-adenosyl-L-methionine = a 5-methoxy-2-methyl-3-(all-trans-polyprenyl)benzene-1,4-diol + S-adenosyl-L-homocysteine + H(+). The protein operates within quinol/quinone metabolism; menaquinone biosynthesis; menaquinol from 1,4-dihydroxy-2-naphthoate: step 2/2. It functions in the pathway cofactor biosynthesis; ubiquinone biosynthesis. Its function is as follows. Methyltransferase required for the conversion of demethylmenaquinol (DMKH2) to menaquinol (MKH2) and the conversion of 2-polyprenyl-6-methoxy-1,4-benzoquinol (DDMQH2) to 2-polyprenyl-3-methyl-6-methoxy-1,4-benzoquinol (DMQH2). The sequence is that of Ubiquinone/menaquinone biosynthesis C-methyltransferase UbiE from Citrifermentans bemidjiense (strain ATCC BAA-1014 / DSM 16622 / JCM 12645 / Bem) (Geobacter bemidjiensis).